Consider the following 308-residue polypeptide: MSRKVFLVGDGAVGSTFANDLLQNTTVDELAIFDVAKDRPVGDSMDLEDITPFTGQTNIHPAEYSDAKDADVCVITAGVPRKPGETRLDLVNKNVKILKTIVDPVVESGFKGVFVVSANPVDILTTLTQKISGFPKDRVIGTGTSLDSMRLRVELAKKLNVPVAKVNSMVLGEHGDTSFENFDESTVDNKPLRDYSEINDNVLSEIESDVRKKGGKIITNKGATFYGVAMMLTQIVSAILDNRSICLPLSAPINGEYGIKHDLYLGTPTIINGNGIEKVIETKLSDVEKAKMINSADKMQEVLSGVEM.

Residues Val-13, Asp-34, Arg-39, Tyr-64, and 78–79 each bind NAD(+); that span reads GV. Arg-87 is a substrate binding site. Thr-100 lines the NAD(+) pocket. 119–122 serves as a coordination point for substrate; the sequence is NPVD. Thr-142 is an NAD(+) binding site. 147 to 150 lines the substrate pocket; that stretch reads DSMR. The active-site Proton acceptor is the His-174. Thr-224 provides a ligand contact to substrate.

The protein belongs to the LDH/MDH superfamily. LDH family. In terms of assembly, homotetramer.

It localises to the cytoplasm. The catalysed reaction is (S)-lactate + NAD(+) = pyruvate + NADH + H(+). Its pathway is fermentation; pyruvate fermentation to lactate; (S)-lactate from pyruvate: step 1/1. Functionally, catalyzes the conversion of lactate to pyruvate. This chain is L-lactate dehydrogenase 2, found in Lactobacillus acidophilus (strain ATCC 700396 / NCK56 / N2 / NCFM).